A 1441-amino-acid polypeptide reads, in one-letter code: Gag-Pol polyprotein (1441 aa).

Glycine 2 carries N-myristoyl glycine; by host lipidation. The interaction with Gp41 stretch occupies residues 7-31 (VLSGGELDRWENIRLRPGGKKKYKL). Residues 8–43 (LSGGELDRWENIRLRPGGKKKYKLKHVVWASRELER) form an interaction with host CALM1 region. Residues 12–19 (ELDRWENI) form an interaction with host AP3D1 region. The tract at residues 14–33 (DRWENIRLRPGGKKKYKLKH) is interaction with membrane phosphatidylinositol 4,5-bisphosphate and RNA. The Nuclear export signal motif lies at 16–22 (WENIRLR). Residues 26–32 (KKKYKLK) carry the Nuclear localization signal motif. An interaction with membrane phosphatidylinositol 4,5-bisphosphate region spans residues 73–77 (EELKS). The disordered stretch occupies residues 106–131 (EEQNKSKKKAQQAAADTGNRGNSSQV). Phosphotyrosine; by host is present on tyrosine 135. The segment at 192–230 (NTVGGHQAAMQMLKETINEEAAEWDRLHPVHAGPITPGQ) is interaction with human PPIA/CYPA and NUP153. Residues 280–366 (YSPSSILDIR…GGPGHKARVL (87 aa)) form a dimerization/Multimerization of capsid protein p24 region. CCHC-type zinc fingers lie at residues 393-410 (IKCF…NCRA) and 414-431 (RGCW…DCTE). The segment covering 451 to 460 (SSEQNRANSP) has biased composition (polar residues). Residues 451–489 (SSEQNRANSPTRRELQVWGRDNNSLSEAGEEAGDDRQGP) form a disordered region. The dimerization of protease stretch occupies residues 495–499 (PQITL). The 70-residue stretch at 514–583 (KEALLDTGAD…TPVNIIGRNL (70 aa)) folds into the Peptidase A2 domain. The For protease activity; shared with dimeric partner role is filled by aspartate 519. 2 dimerization of protease regions span residues 543–549 (GIGGFIK) and 582–594 (NLLT…LNFP). A Reverse transcriptase domain is found at 637-827 (EGKISKIGPE…PPFLWMGYEL (191 aa)). Aspartate 703, aspartate 778, and aspartate 779 together coordinate Mg(2+). The tract at residues 820 to 828 (FLWMGYELH) is RT 'primer grip'. The Tryptophan repeat motif motif lies at 991–1007 (WETWWTEYTXATWIPEW). In terms of domain architecture, RNase H type-1 spans 1027–1150 (IVGAETFYVD…VDKLVSAGIR (124 aa)). Mg(2+)-binding residues include aspartate 1036, glutamate 1071, aspartate 1091, and aspartate 1142. The Integrase-type zinc-finger motif lies at 1156 to 1197 (DGIDKAQEDHEKYHSNWRAMASDFNLPPIVAKEIVASCDKCQ). Residues histidine 1165, histidine 1169, cysteine 1193, and cysteine 1196 each contribute to the Zn(2+) site. Residues 1207–1357 (VDCSPGIWQL…SAGERIVGII (151 aa)) enclose the Integrase catalytic domain. Aspartate 1217, aspartate 1269, and glutamate 1305 together coordinate Mg(2+). A DNA-binding region (integrase-type) is located at residues 1376–1423 (FRVYYRDSRDPLWKGPAKLLWKGEGAVVIQDNNDIKVVPRRKAKVIRD).

As to quaternary structure, homotrimer; further assembles as hexamers of trimers. Interacts with gp41 (via C-terminus). Interacts with host CALM1; this interaction induces a conformational change in the Matrix protein, triggering exposure of the myristate group. Interacts with host AP3D1; this interaction allows the polyprotein trafficking to multivesicular bodies during virus assembly. Part of the pre-integration complex (PIC) which is composed of viral genome, matrix protein, Vpr and integrase. In terms of assembly, homodimer; the homodimer further multimerizes as homohexamers or homopentamers. Interacts with human PPIA/CYPA; This interaction stabilizes the capsid. Interacts with human NUP153. Interacts with host PDZD8; this interaction stabilizes the capsid. Interacts with monkey TRIM5; this interaction destabilizes the capsid. Homodimer, whose active site consists of two apposed aspartic acid residues. As to quaternary structure, heterodimer of p66 RT and p51 RT (RT p66/p51). Heterodimerization of RT is essential for DNA polymerase activity. The overall folding of the subdomains is similar in p66 RT and p51 RT but the spatial arrangements of the subdomains are dramatically different. In terms of assembly, homotetramer; may further associate as a homohexadecamer. Part of the pre-integration complex (PIC) which is composed of viral genome, matrix protein, Vpr and integrase. Interacts with human SMARCB1/INI1 and human PSIP1/LEDGF isoform 1. Interacts with human KPNA3; this interaction might play a role in nuclear import of the pre-integration complex. Interacts with human NUP153; this interaction might play a role in nuclear import of the pre-integration complex. Mg(2+) serves as cofactor. Specific enzymatic cleavages by the viral protease yield mature proteins. The protease is released by autocatalytic cleavage. The polyprotein is cleaved during and after budding, this process is termed maturation. Proteolytic cleavage of p66 RT removes the RNase H domain to yield the p51 RT subunit. Nucleocapsid protein p7 might be further cleaved after virus entry. Post-translationally, tyrosine phosphorylated presumably in the virion by a host kinase. Phosphorylation is apparently not a major regulator of membrane association. In terms of processing, phosphorylated possibly by host MAPK1; this phosphorylation is necessary for Pin1-mediated virion uncoating. Methylated by host PRMT6, impairing its function by reducing RNA annealing and the initiation of reverse transcription.

It localises to the host cell membrane. The protein resides in the host endosome. It is found in the host multivesicular body. Its subcellular location is the virion membrane. The protein localises to the host nucleus. It localises to the host cytoplasm. The protein resides in the virion. It catalyses the reaction Specific for a P1 residue that is hydrophobic, and P1' variable, but often Pro.. It carries out the reaction Endohydrolysis of RNA in RNA/DNA hybrids. Three different cleavage modes: 1. sequence-specific internal cleavage of RNA. Human immunodeficiency virus type 1 and Moloney murine leukemia virus enzymes prefer to cleave the RNA strand one nucleotide away from the RNA-DNA junction. 2. RNA 5'-end directed cleavage 13-19 nucleotides from the RNA end. 3. DNA 3'-end directed cleavage 15-20 nucleotides away from the primer terminus.. The catalysed reaction is 3'-end directed exonucleolytic cleavage of viral RNA-DNA hybrid.. The enzyme catalyses DNA(n) + a 2'-deoxyribonucleoside 5'-triphosphate = DNA(n+1) + diphosphate. Its activity is regulated as follows. Protease: The viral protease is inhibited by many synthetic protease inhibitors (PIs), such as amprenavir, atazanavir, indinavir, loprinavir, nelfinavir, ritonavir and saquinavir. Use of protease inhibitors in tritherapy regimens permit more ambitious therapeutic strategies. Reverse transcriptase/ribonuclease H: RT can be inhibited either by nucleoside RT inhibitors (NRTIs) or by non nucleoside RT inhibitors (NNRTIs). NRTIs act as chain terminators, whereas NNRTIs inhibit DNA polymerization by binding a small hydrophobic pocket near the RT active site and inducing an allosteric change in this region. Classical NRTIs are abacavir, adefovir (PMEA), didanosine (ddI), lamivudine (3TC), stavudine (d4T), tenofovir (PMPA), zalcitabine (ddC), and zidovudine (AZT). Classical NNRTIs are atevirdine (BHAP U-87201E), delavirdine, efavirenz (DMP-266), emivirine (I-EBU), and nevirapine (BI-RG-587). The tritherapies used as a basic effective treatment of AIDS associate two NRTIs and one NNRTI. Its function is as follows. Mediates, with Gag polyprotein, the essential events in virion assembly, including binding the plasma membrane, making the protein-protein interactions necessary to create spherical particles, recruiting the viral Env proteins, and packaging the genomic RNA via direct interactions with the RNA packaging sequence (Psi). Gag-Pol polyprotein may regulate its own translation, by the binding genomic RNA in the 5'-UTR. At low concentration, the polyprotein would promote translation, whereas at high concentration, the polyprotein would encapsidate genomic RNA and then shut off translation. In terms of biological role, targets the polyprotein to the plasma membrane via a multipartite membrane-binding signal, that includes its myristoylated N-terminus. Matrix protein is part of the pre-integration complex. Implicated in the release from host cell mediated by Vpu. Binds to RNA. Functionally, forms the conical core that encapsulates the genomic RNA-nucleocapsid complex in the virion. Most core are conical, with only 7% tubular. The core is constituted by capsid protein hexamer subunits. The core is disassembled soon after virion entry. Host restriction factors such as TRIM5-alpha or TRIMCyp bind retroviral capsids and cause premature capsid disassembly, leading to blocks in reverse transcription. Capsid restriction by TRIM5 is one of the factors which restricts HIV-1 to the human species. Host PIN1 apparently facilitates the virion uncoating. On the other hand, interactions with PDZD8 or CYPA stabilize the capsid. Encapsulates and protects viral dimeric unspliced genomic RNA (gRNA). Binds these RNAs through its zinc fingers. Acts as a nucleic acid chaperone which is involved in rearangement of nucleic acid secondary structure during gRNA retrotranscription. Also facilitates template switch leading to recombination. As part of the polyprotein, participates in gRNA dimerization, packaging, tRNA incorporation and virion assembly. Its function is as follows. Aspartyl protease that mediates proteolytic cleavages of Gag and Gag-Pol polyproteins during or shortly after the release of the virion from the plasma membrane. Cleavages take place as an ordered, step-wise cascade to yield mature proteins. This process is called maturation. Displays maximal activity during the budding process just prior to particle release from the cell. Also cleaves Nef and Vif, probably concomitantly with viral structural proteins on maturation of virus particles. Hydrolyzes host EIF4GI and PABP1 in order to shut off the capped cellular mRNA translation. The resulting inhibition of cellular protein synthesis serves to ensure maximal viral gene expression and to evade host immune response. Also mediates cleavage of host YTHDF3. Mediates cleavage of host CARD8, thereby activating the CARD8 inflammasome, leading to the clearance of latent HIV-1 in patient CD4(+) T-cells after viral reactivation; in contrast, HIV-1 can evade CARD8-sensing when its protease remains inactive in infected cells prior to viral budding. In terms of biological role, multifunctional enzyme that converts the viral RNA genome into dsDNA in the cytoplasm, shortly after virus entry into the cell. This enzyme displays a DNA polymerase activity that can copy either DNA or RNA templates, and a ribonuclease H (RNase H) activity that cleaves the RNA strand of RNA-DNA heteroduplexes in a partially processive 3' to 5' endonucleasic mode. Conversion of viral genomic RNA into dsDNA requires many steps. A tRNA(3)-Lys binds to the primer-binding site (PBS) situated at the 5'-end of the viral RNA. RT uses the 3' end of the tRNA primer to perform a short round of RNA-dependent minus-strand DNA synthesis. The reading proceeds through the U5 region and ends after the repeated (R) region which is present at both ends of viral RNA. The portion of the RNA-DNA heteroduplex is digested by the RNase H, resulting in a ssDNA product attached to the tRNA primer. This ssDNA/tRNA hybridizes with the identical R region situated at the 3' end of viral RNA. This template exchange, known as minus-strand DNA strong stop transfer, can be either intra- or intermolecular. RT uses the 3' end of this newly synthesized short ssDNA to perform the RNA-dependent minus-strand DNA synthesis of the whole template. RNase H digests the RNA template except for two polypurine tracts (PPTs) situated at the 5'-end and near the center of the genome. It is not clear if both polymerase and RNase H activities are simultaneous. RNase H probably can proceed both in a polymerase-dependent (RNA cut into small fragments by the same RT performing DNA synthesis) and a polymerase-independent mode (cleavage of remaining RNA fragments by free RTs). Secondly, RT performs DNA-directed plus-strand DNA synthesis using the PPTs that have not been removed by RNase H as primers. PPTs and tRNA primers are then removed by RNase H. The 3' and 5' ssDNA PBS regions hybridize to form a circular dsDNA intermediate. Strand displacement synthesis by RT to the PBS and PPT ends produces a blunt ended, linear dsDNA copy of the viral genome that includes long terminal repeats (LTRs) at both ends. Functionally, catalyzes viral DNA integration into the host chromosome, by performing a series of DNA cutting and joining reactions. This enzyme activity takes place after virion entry into a cell and reverse transcription of the RNA genome in dsDNA. The first step in the integration process is 3' processing. This step requires a complex comprising the viral genome, matrix protein, Vpr and integrase. This complex is called the pre-integration complex (PIC). The integrase protein removes 2 nucleotides from each 3' end of the viral DNA, leaving recessed CA OH's at the 3' ends. In the second step, the PIC enters cell nucleus. This process is mediated through integrase and Vpr proteins, and allows the virus to infect a non dividing cell. This ability to enter the nucleus is specific of lentiviruses, other retroviruses cannot and rely on cell division to access cell chromosomes. In the third step, termed strand transfer, the integrase protein joins the previously processed 3' ends to the 5' ends of strands of target cellular DNA at the site of integration. The 5'-ends are produced by integrase-catalyzed staggered cuts, 5 bp apart. A Y-shaped, gapped, recombination intermediate results, with the 5'-ends of the viral DNA strands and the 3' ends of target DNA strands remaining unjoined, flanking a gap of 5 bp. The last step is viral DNA integration into host chromosome. This involves host DNA repair synthesis in which the 5 bp gaps between the unjoined strands are filled in and then ligated. Since this process occurs at both cuts flanking the HIV genome, a 5 bp duplication of host DNA is produced at the ends of HIV-1 integration. Alternatively, Integrase may catalyze the excision of viral DNA just after strand transfer, this is termed disintegration. The protein is Gag-Pol polyprotein (gag-pol) of Human immunodeficiency virus type 1 group M subtype B (isolate MN) (HIV-1).